Here is a 315-residue protein sequence, read N- to C-terminus: Oxalate oxidoreductase subunit delta (315 aa).

4Fe-4S ferredoxin-type domains are found at residues 252–280 (QRPIIDREACTECYTCWIYCPDSCITRTE) and 281–310 (EGPVFNMKYCKGCGLCTAVCPSGALTNVPE). Residues C261, C264, C267, C271, C290, C293, C296, and C300 each coordinate [4Fe-4S] cluster.

Dimer of heterotrimer of one alpha, one beta and one delta subunit. Requires [4Fe-4S] cluster as cofactor.

The enzyme catalyses oxidized 2[4Fe-4S]-[ferredoxin] + oxalate = reduced 2[4Fe-4S]-[ferredoxin] + 2 CO2. Its function is as follows. Catalyzes the anaerobic oxidation of oxalate using a broad range of electron acceptors, including ferredoxin and the nickel-dependent carbon monoxide dehydrogenase. Does not require coenzyme A as cosubstrate. Enables anaerobic growth on oxalate which is used as energy source by the bacteria. The polypeptide is Oxalate oxidoreductase subunit delta (Moorella thermoacetica (strain ATCC 39073 / JCM 9320)).